The following is a 210-amino-acid chain: Keratin-associated protein 4-9 (210 aa).

28 tandem repeats follow at residues 24–28 (CCRPS), 29–33 (CCETT), 34–38 (CCRTT), 39–43 (CCRPS), 44–48 (CCVSS), 49–53 (CCRPQ), 54–58 (CCQSV), 59–63 (CCQPT), 69–73 (CCQTT), 74–78 (CCRTT), 84–88 (CCVSS), 89–93 (CCRPQ), 94–98 (CCQPA), 99–103 (CCQPT), 104–108 (CCRPS), 109–113 (CCETT), 114–118 (CCHPR), 119–123 (CCISS), 124–128 (CCRPS), 129–133 (CCVSS), 134–138 (CCKPQ), 139–143 (CCQSV), 144–148 (CCQPN), 149–153 (CCRPS), 159–163 (CCRPS), 164–168 (CCESS), 169–173 (CCRPC), and 174–178 (CCVRP). Residues 24–178 (CCRPSCCETT…CCRPCCCVRP (155 aa)) form a 29 X 5 AA repeats of C-C-[RQVHIEK]-[SPTR]-[VSTQCRNP] region.

It belongs to the KRTAP type 4 family. Interacts with hair keratins. Expressed in the hair follicles.

In the hair cortex, hair keratin intermediate filaments are embedded in an interfilamentous matrix, consisting of hair keratin-associated proteins (KRTAP), which are essential for the formation of a rigid and resistant hair shaft through their extensive disulfide bond cross-linking with abundant cysteine residues of hair keratins. The matrix proteins include the high-sulfur and high-glycine-tyrosine keratins. The polypeptide is Keratin-associated protein 4-9 (KRTAP4-9) (Homo sapiens (Human)).